Here is a 115-residue protein sequence, read N- to C-terminus: U2-ctenitoxin-Pn1b (115 aa).

An N-terminal signal peptide occupies residues 1–17 (MKVAVIILSILVLAAAS). Residues 18 to 61 (ESIEEYREDFSRPNAMERSANDWIPTAPSAVERSADFAVEELER) constitute a propeptide that is removed on maturation. 5 disulfide bridges follow: Cys-64–Cys-78, Cys-71–Cys-84, Cys-75–Cys-113, Cys-77–Cys-98, and Cys-86–Cys-96. Lys-115 is a propeptide.

It belongs to the neurotoxin 03 (Tx2) family. 04 subfamily. As to expression, expressed by the venom gland.

It is found in the secreted. Its function is as follows. Blocks voltage-gated sodium channels (Nav). The protein is U2-ctenitoxin-Pn1b of Phoneutria nigriventer (Brazilian armed spider).